The primary structure comprises 121 residues: C-type natriuretic peptide 4 (121 aa).

The N-terminal stretch at methionine 1–alanine 22 is a signal peptide. Residues glutamine 23–lysine 96 constitute a propeptide that is removed on maturation. Residues leucine 80–lysine 109 form a disordered region. The cysteines at positions 105 and 121 are disulfide-linked.

Belongs to the natriuretic peptide family. Brain, spinal cord, spleen, heart and fin, and to a lower extent in gill and ovary.

The protein localises to the secreted. Exhibits natriuretic and vasodepressant activity. Has cGMP-stimulating activity. May help to regulate body fluid homeostasis in a variety of aquatic environments. This Oryzias latipes (Japanese rice fish) protein is C-type natriuretic peptide 4.